Reading from the N-terminus, the 414-residue chain is Enolase (414 aa).

Gln-162 provides a ligand contact to (2R)-2-phosphoglycerate. The active-site Proton donor is Glu-204. Residues Asp-239, Glu-280, and Asp-307 each coordinate Mg(2+). 4 residues coordinate (2R)-2-phosphoglycerate: Lys-332, Arg-361, Ser-362, and Lys-383. The active-site Proton acceptor is Lys-332.

Belongs to the enolase family. Mg(2+) serves as cofactor.

The protein localises to the cytoplasm. Its subcellular location is the secreted. It localises to the cell surface. The enzyme catalyses (2R)-2-phosphoglycerate = phosphoenolpyruvate + H2O. Its pathway is carbohydrate degradation; glycolysis; pyruvate from D-glyceraldehyde 3-phosphate: step 4/5. In terms of biological role, catalyzes the reversible conversion of 2-phosphoglycerate (2-PG) into phosphoenolpyruvate (PEP). It is essential for the degradation of carbohydrates via glycolysis. The chain is Enolase from Campylobacter jejuni subsp. jejuni serotype O:6 (strain 81116 / NCTC 11828).